The following is a 902-amino-acid chain: Histone-lysine N-methyltransferase CLF (902 aa).

Over residues 1–14 the composition is skewed to low complexity; it reads MASEASPSSSATRS. Disordered regions lie at residues 1–33, 73–107, and 335–522; these read MASE…KEVS, SMER…SNNN, and GKTG…FMGE. Composition is skewed to basic and acidic residues over residues 15–33 and 78–95; these read EPPK…KEVS and GSCK…RDSP. Residues 337 to 357 show a composition bias toward polar residues; sequence TGTSSDGAGTKTTPTKFSSKL. The segment covering 394-403 has biased composition (low complexity); the sequence is DKVSSSPKVK. The segment covering 404 to 416 has biased composition (basic residues); that stretch reads GSGRRVGRKRNKN. Residues 438–449 are compositionally biased toward low complexity; the sequence is SDSIASGSCSPS. Positions 459 to 473 are enriched in polar residues; that stretch reads ATSSSQKHVKSGNSG. The 51-residue stretch at 531–581 folds into the SANT domain; it reads TNKLWRPLEKSLFDKGVEIFGMNSCLIARNLLSGFKSCWEVFQYMTCSENK. In terms of domain architecture, CXC spans 638–737; the sequence is RKRITEKKDQ…SLGVPSQRGD (100 aa). The 116-residue stretch at 752–867 folds into the SET domain; that stretch reads QRVLLGISDV…AGEELFYDYR (116 aa). Residue tyrosine 866 participates in S-adenosyl-L-methionine binding. The span at 875–890 shows a compositional bias: basic and acidic residues; it reads AWAKKPEAPGSKKDEN. The disordered stretch occupies residues 875–902; it reads AWAKKPEAPGSKKDENVTPSVGRPKKLA.

The protein belongs to the class V-like SAM-binding methyltransferase superfamily. Histone-lysine methyltransferase family. EZ subfamily. As to quaternary structure, probable component of a PcG complex. In plants, PcG complexes are probably composed of a member of the EZ family (CLF or MEA), FIE, and a member of the VEFS family (FIS2, VRN2 or EMF2). Interacts with FIE. Interacts with RING1A. Binds to ALP1. Interacts with BLI. Binds to ATX1 in the nucleus. Interacts with EOL1. Interacts (via SANT domain) with HXK1 in the nucleus. As to expression, strongly expressed throughout the apical meristem, leaf primordia, and leaves of 7-8 day-old seedling. Weakly expressed in the vasculature of hypocotyl. Strongly expressed throughout the young stages 1 and 2 floral meristems that arose on the flanks of the apex. In stage 3 and 4 flowers, it is expressed in the emerging sepal primordia and in the dome of the floral meristem. During stages 6 and 7, it is strongly expressed in developing petal and stamen, and weakly expressed in the sepals. Late in floral development, at stage 12, it is weakly expressed in all floral whorls, and expressed at intermediate level in petals and ovules.

Its subcellular location is the nucleus. The catalysed reaction is L-lysyl-[histone] + S-adenosyl-L-methionine = N(6)-methyl-L-lysyl-[histone] + S-adenosyl-L-homocysteine + H(+). Polycomb group (PcG) protein. Catalytic subunit of some PcG multiprotein complex, which methylates 'Lys-27' of histone H3, leading to transcriptional repression of the affected target genes, mainly abscisic acid (ABA) responsive elements. Required to regulate floral development by repressing the AGAMOUS homeotic gene in leaves, inflorescence stems and flowers. Together with ATX1, modulates AG nucleosome methylation statement. Regulates the antero-posterior organization of the endosperm, as well as the division and elongation rates of leaf cells. PcG proteins act by forming multiprotein complexes, which are required to maintain the transcriptionally repressive state of homeotic genes throughout development. PcG proteins are not required to initiate repression, but to maintain it during later stages of development. Forms a nuclear complex with EZA1/SWN and HXK1 to target common glucose-responsive genes and regulate glucose signaling by glucose-mediated gene repression. Affects the recruitment of HXK1 to the target chromatin. The protein is Histone-lysine N-methyltransferase CLF of Arabidopsis thaliana (Mouse-ear cress).